Here is a 499-residue protein sequence, read N- to C-terminus: Flotillin-like protein 2 (499 aa).

Cys37 carries S-palmitoyl cysteine lipidation. Residues 243–319 adopt a coiled-coil conformation; the sequence is LREEAKVKAE…LRLTEKLKAE (77 aa).

The protein belongs to the band 7/mec-2 family. Flotillin subfamily. Post-translationally, may be palmitoylated.

It is found in the cell membrane. Its subcellular location is the membrane. The protein localises to the caveola. May act as a scaffolding protein within caveolar membranes, functionally participating in formation of caveolae or caveolae-like vesicles. In Oryza sativa subsp. japonica (Rice), this protein is Flotillin-like protein 2 (FLOT2).